Consider the following 66-residue polypeptide: Large ribosomal subunit protein bL35 (66 aa).

A compositionally biased stretch (basic residues) spans 1 to 16 (MPKQKTHRASAKRFKR). The interval 1–21 (MPKQKTHRASAKRFKRTGSGG) is disordered.

This sequence belongs to the bacterial ribosomal protein bL35 family.

The chain is Large ribosomal subunit protein bL35 from Streptococcus sanguinis (strain SK36).